Consider the following 92-residue polypeptide: Small ribosomal subunit protein uS19 (92 aa).

This sequence belongs to the universal ribosomal protein uS19 family.

Functionally, protein S19 forms a complex with S13 that binds strongly to the 16S ribosomal RNA. The protein is Small ribosomal subunit protein uS19 of Gloeothece citriformis (strain PCC 7424) (Cyanothece sp. (strain PCC 7424)).